The chain runs to 181 residues: ATP synthase subunit delta (181 aa).

It belongs to the ATPase delta chain family. F-type ATPases have 2 components, F(1) - the catalytic core - and F(0) - the membrane proton channel. F(1) has five subunits: alpha(3), beta(3), gamma(1), delta(1), epsilon(1). F(0) has three main subunits: a(1), b(2) and c(10-14). The alpha and beta chains form an alternating ring which encloses part of the gamma chain. F(1) is attached to F(0) by a central stalk formed by the gamma and epsilon chains, while a peripheral stalk is formed by the delta and b chains.

Its subcellular location is the cell inner membrane. Its function is as follows. F(1)F(0) ATP synthase produces ATP from ADP in the presence of a proton or sodium gradient. F-type ATPases consist of two structural domains, F(1) containing the extramembraneous catalytic core and F(0) containing the membrane proton channel, linked together by a central stalk and a peripheral stalk. During catalysis, ATP synthesis in the catalytic domain of F(1) is coupled via a rotary mechanism of the central stalk subunits to proton translocation. Functionally, this protein is part of the stalk that links CF(0) to CF(1). It either transmits conformational changes from CF(0) to CF(1) or is implicated in proton conduction. This is ATP synthase subunit delta from Orientia tsutsugamushi (strain Boryong) (Rickettsia tsutsugamushi).